Consider the following 752-residue polypeptide: MWNALQDRDSAEVLGHRQRWLRVGTLVLALTGTFLIGFLFGWFIKPSNEATGNVSHSGMKKEFLHELKAENIKKFLYNFTRTPHLAGTQNNFELAKQIHDQWKEFGLDLVELSHYDVLLSYPNKTHPNYISIINEDGNEIFKTSLSEQPPPGYENISDVVPPYSAFSPQGTPEGDLVYVNYARTEDFFKLEREMKISCSGKIVIARYGKVFRGNMVKNAQLAGAKGMILYSDPADYFVPAVKSYPDGWNLPGGGVQRGNVLNLNGAGDPLTPGYPANEHAYRHELTNAVGLPSIPVHPIGYDDAQKLLEHMGGPAPPDSSWKGGLKVPYNVGPGFAGNFSTQKVKMHIHSYTKVTRIYNVIGTLKGALEPDRYVILGGHRDAWVFGGIDPQSGAAVVHEIVRSFGTLKKKGRRPRRTILFASWDAEEFGLLGSTEWAEEHSRLLQERGVAYINADSSIEGNYTLRVDCTPLMYSLVYNLTKELQSPDEGFEGKSLYDSWKEKSPSPEFIGMPRISKLGSGNDFEVFFQRLGIASGRARYTKNWKTNKVSSYPLYHSVYETYELVVKFYDPTFKYHLTVAQVRGAMVFELANSIVLPFDCQSYAVALKKYADTIYNISMKHPQEMKAYMISFDSLFSAVNNFTDVASKFNQRLQELDKSNPILLRIMNDQLMYLERAFIDPLGLPGRPFYRHIIYAPSSHNKYAGESFPGIYDALFDISSKVNASKAWNEVKRQISIATFTVQAAAETLREVA.

Topologically, residues 1–22 (MWNALQDRDSAEVLGHRQRWLR) are cytoplasmic. Ser-10 carries the phosphoserine modification. A helical; Signal-anchor for type II membrane protein membrane pass occupies residues 23-44 (VGTLVLALTGTFLIGFLFGWFI). At 45 to 752 (KPSNEATGNV…AAAETLREVA (708 aa)) the chain is on the extracellular side. 3 N-linked (GlcNAc...) asparagine glycosylation sites follow: Asn-78, Asn-123, and Asn-155. Arg-212 and Asn-259 together coordinate substrate. Positions 271 and 274 each coordinate Ca(2+). An NAALADase region spans residues 276–589 (ANEHAYRHEL…QVRGAMVFEL (314 aa)). An N-linked (GlcNAc...) asparagine glycan is attached at Asn-338. 2 residues coordinate Zn(2+): His-379 and Asp-389. Substrate is bound at residue Glu-426. Residue Glu-426 is the Nucleophile; for NAALADase activity of the active site. Residue Glu-427 coordinates Zn(2+). Ca(2+) is bound by residues Glu-435 and Glu-438. Position 455 (Asp-455) interacts with Zn(2+). Asn-461 and Asn-478 each carry an N-linked (GlcNAc...) asparagine glycan. Substrate is bound by residues 519–520 (SG), Asn-521, 536–538 (RAR), Tyr-554, and 554–555 (YH). His-555 serves as a coordination point for Zn(2+). Asn-615 is a glycosylation site (N-linked (GlcNAc...) asparagine). Catalysis depends on Ser-630, which acts as the Charge relay system. A glycan (N-linked (GlcNAc...) asparagine) is linked at Asn-640. Catalysis depends on charge relay system residues Asp-668 and His-691. 701–702 (KY) is a substrate binding site. Asn-722 carries an N-linked (GlcNAc...) asparagine glycan.

The protein belongs to the peptidase M28 family. M28B subfamily. Homodimer. Zn(2+) is required as a cofactor. As to expression, expressed predominantly in the hippocampal region of the brain and in kidney. Lower levels in the ovary, testis and mandibular gland.

It localises to the cell membrane. It catalyses the reaction Release of an unsubstituted, C-terminal glutamyl residue, typically from Ac-Asp-Glu or folylpoly-gamma-glutamates.. With respect to regulation, the NAALADase and folate hydrolase activities are inhibited by quisqualic acid. In terms of biological role, has both folate hydrolase and N-acetylated-alpha-linked-acidic dipeptidase (NAALADase) activity. Has a preference for tri-alpha-glutamate peptides. In the intestine, required for the uptake of folate. In the brain, modulates excitatory neurotransmission through the hydrolysis of the neuropeptide, N-aceylaspartylglutamate (NAAG), thereby releasing glutamate. Also exhibits a dipeptidyl-peptidase IV type activity. In vitro, cleaves Gly-Pro-AMC. This is Glutamate carboxypeptidase 2 (Folh1) from Mus musculus (Mouse).